Here is a 987-residue protein sequence, read N- to C-terminus: MSTSSMKSQDSNGLRERINNGSATNDDNMTARCGSEPPSEDFELDKDKKTFGRTPDGTIFTVPQTHDMVSQLLDPRQPKNLSDLIVLVILALHIFALYALPSSLKRPVFAVIFLFWRGCYNVGIGYLLHIQSHHKRIVAWAKKWNLFENPVTGKNPRPWLYQLIKTELETKIPEDYKFEQAPIEYNTWLVFRRVVDLILMCDFTSYCLFAIACGGAPSDEGLVMSTLRWGAGIILVLFNLWVKLDAHRVVKDYAWYWGDFFYLIDQELTFDGVFEMAPHPMYSVGYAGYYGISMMAASYSVLAISIVAHMAQFAFLLVVENPHIDKTYNPPPPRKHQDNPTPSDIDHANALASSKEGLEYSLDSSPTQTPPLNTTQPLAVHNLMGLGNIDLFRITDVSILLLLGYVFLITALTPSTPVYQALFVINAMFWRLWYSVGLGIILDRQSSKKMWTRHFVKYGDSTEEAWRQWKGMYHLSMTMCYASFIAATWKMYSIPSDWAYGLVLLRHVLGAGLVSLQLWTAISIYESLGEFGWFFGDFFFDHAPKLTYSGIYRYLNNPERIIGLAGIWGAVFITGSRAIFCLALLSHTLTLAFLQFVEKPHMQKLYGRNLRSEAGLSKSIKRSLPPQIKKWHGNVDRVLEETGHFVEEFLDAARPKLAAGVSTIFRDTSALFSQYPARLTLTRIAPDLAGYDPRDYSVTIEGTSSDSALHKRTTSKEGITARIPQERMDGFKPLVFEYGAPIKVKWTAPTKHSKADWIGMYMVADNASREVTRIPSAGRWVATVPNEYESSPADQGILVSNRFVSGSKRIDGSTQDYVEGEMIFEGDKLFWTQGVFEFRYHHDGKHNVMAISLPFEIRIPRFDDENSNVNITLDSDNSQSQSLIRSAVEQALLPVVRNCFDRDPDIAPNSVDESFGVLVARDGKYPRRVVHAVHFMFGIEFAPEVVRADGNVRNLAWRICNAKQVLAPYSMSHSKGTNTPDVDGEKA.

2 stretches are compositionally biased toward polar residues: residues 1–12 (MSTSSMKSQDSN) and 19–28 (NNGSATNDDN). The interval 1–56 (MSTSSMKSQDSNGLRERINNGSATNDDNMTARCGSEPPSEDFELDKDKKTFGRTPD) is disordered. Residues 1 to 83 (MSTSSMKSQD…DPRQPKNLSD (83 aa)) are Lumenal-facing. Residues 84-104 (LIVLVILALHIFALYALPSSL) traverse the membrane as a helical segment. Residues 105–107 (KRP) lie on the Cytoplasmic side of the membrane. The chain crosses the membrane as a helical span at residues 108 to 128 (VFAVIFLFWRGCYNVGIGYLL). The Lumenal segment spans residues 129–193 (HIQSHHKRIV…EYNTWLVFRR (65 aa)). Residues 194–214 (VVDLILMCDFTSYCLFAIACG) traverse the membrane as a helical segment. Topologically, residues 215-221 (GAPSDEG) are cytoplasmic. Residues 222–242 (LVMSTLRWGAGIILVLFNLWV) traverse the membrane as a helical segment. At 243–271 (KLDAHRVVKDYAWYWGDFFYLIDQELTFD) the chain is on the lumenal side. The helical transmembrane segment at 272-292 (GVFEMAPHPMYSVGYAGYYGI) threads the bilayer. Over 293-298 (SMMAAS) the chain is Cytoplasmic. The chain crosses the membrane as a helical span at residues 299–319 (YSVLAISIVAHMAQFAFLLVV). The Lumenal portion of the chain corresponds to 320-393 (ENPHIDKTYN…MGLGNIDLFR (74 aa)). The tract at residues 327-348 (TYNPPPPRKHQDNPTPSDIDHA) is disordered. The chain crosses the membrane as a helical span at residues 394 to 414 (ITDVSILLLLGYVFLITALTP). Over 415 to 421 (STPVYQA) the chain is Cytoplasmic. Residues 422–442 (LFVINAMFWRLWYSVGLGIIL) form a helical membrane-spanning segment. The Lumenal segment spans residues 443-483 (DRQSSKKMWTRHFVKYGDSTEEAWRQWKGMYHLSMTMCYAS). A helical membrane pass occupies residues 484-504 (FIAATWKMYSIPSDWAYGLVL). The Cytoplasmic segment spans residues 505–507 (LRH). Residues 508 to 528 (VLGAGLVSLQLWTAISIYESL) traverse the membrane as a helical segment. Residues 529 to 560 (GEFGWFFGDFFFDHAPKLTYSGIYRYLNNPER) lie on the Lumenal side of the membrane. Residues 561–581 (IIGLAGIWGAVFITGSRAIFC) traverse the membrane as a helical segment. The Cytoplasmic portion of the chain corresponds to 582–987 (LALLSHTLTL…NTPDVDGEKA (406 aa)).

The protein belongs to the class VI-like SAM-binding methyltransferase superfamily. CHO2 family.

It is found in the endoplasmic reticulum membrane. It carries out the reaction a 1,2-diacyl-sn-glycero-3-phosphoethanolamine + S-adenosyl-L-methionine = a 1,2-diacyl-sn-glycero-3-phospho-N-methylethanolamine + S-adenosyl-L-homocysteine + H(+). It functions in the pathway phospholipid metabolism; phosphatidylcholine biosynthesis. Its function is as follows. Catalyzes the first step of the methylation pathway of phosphatidylcholine biosynthesis, the SAM-dependent methylation of phosphatidylethanolamine (PE) to phosphatidylmonomethylethanolamine (PMME). This Botryotinia fuckeliana (strain B05.10) (Noble rot fungus) protein is Phosphatidylethanolamine N-methyltransferase (CHO2).